A 443-amino-acid chain; its full sequence is Threonine/serine transporter TdcC (443 aa).

11 helical membrane passes run 24 to 44, 45 to 65, 95 to 115, 140 to 160, 163 to 183, 207 to 227, 259 to 279, 319 to 339, 363 to 383, 385 to 405, and 423 to 443; these read WVLGLFGTAIGAGVLFFPISA, GIGGLLPIIFMLILAFPIAFF, VGGVVITFLYFFAICPLLWIY, VVALAILLVMAFFIYFGKDLM, VMGYLVFPFITCLVLISLSLI, ILVTVWLGIAIMVFSFNFSPI, ASVLMVVVVMFFAFSCLFTLS, ASIIALVAIFKSFFGHYLGTL, LNMISMVIIMGSTWVIAYINP, ILDLIGAMGAPIIAALLCLLP, and SNYFVTIIGLLTILNIVYQLM.

The protein belongs to the amino acid/polyamine transporter 2 family. SdaC/TdcC subfamily.

The protein localises to the cell inner membrane. The enzyme catalyses L-threonine(in) + H(+)(in) = L-threonine(out) + H(+)(out). It catalyses the reaction L-serine(in) + H(+)(in) = L-serine(out) + H(+)(out). Its function is as follows. Involved in the import of threonine and serine into the cell, with the concomitant import of a proton (symport system). This Edwardsiella piscicida protein is Threonine/serine transporter TdcC.